The sequence spans 265 residues: SPbeta prophage-derived uncharacterized protein YomU (265 aa).

The interval 238-265 (KADGTKGVVTSDEGTGSSQSSDLGGTTE) is disordered. Polar residues predominate over residues 249 to 265 (DEGTGSSQSSDLGGTTE).

This chain is SPbeta prophage-derived uncharacterized protein YomU (yomU), found in Bacillus subtilis (strain 168).